We begin with the raw amino-acid sequence, 423 residues long: Serine hydroxymethyltransferase 2 (423 aa).

(6S)-5,6,7,8-tetrahydrofolate is bound by residues L121 and 125–127; that span reads GHL. K230 is subject to N6-(pyridoxal phosphate)lysine. Residue 356 to 358 coordinates (6S)-5,6,7,8-tetrahydrofolate; the sequence is SPF.

Belongs to the SHMT family. As to quaternary structure, homodimer. It depends on pyridoxal 5'-phosphate as a cofactor.

The protein localises to the cytoplasm. The enzyme catalyses (6R)-5,10-methylene-5,6,7,8-tetrahydrofolate + glycine + H2O = (6S)-5,6,7,8-tetrahydrofolate + L-serine. The protein operates within one-carbon metabolism; tetrahydrofolate interconversion. It functions in the pathway amino-acid biosynthesis; glycine biosynthesis; glycine from L-serine: step 1/1. Functionally, catalyzes the reversible interconversion of serine and glycine with tetrahydrofolate (THF) serving as the one-carbon carrier. This reaction serves as the major source of one-carbon groups required for the biosynthesis of purines, thymidylate, methionine, and other important biomolecules. Also exhibits THF-independent aldolase activity toward beta-hydroxyamino acids, producing glycine and aldehydes, via a retro-aldol mechanism. This chain is Serine hydroxymethyltransferase 2, found in Pectobacterium atrosepticum (strain SCRI 1043 / ATCC BAA-672) (Erwinia carotovora subsp. atroseptica).